Reading from the N-terminus, the 257-residue chain is Acetylglutamate kinase (257 aa).

Substrate-binding positions include 41-42, Arg-63, and Asn-158; that span reads GG.

The protein belongs to the acetylglutamate kinase family. ArgB subfamily.

The protein localises to the cytoplasm. The catalysed reaction is N-acetyl-L-glutamate + ATP = N-acetyl-L-glutamyl 5-phosphate + ADP. Its pathway is amino-acid biosynthesis; L-arginine biosynthesis; N(2)-acetyl-L-ornithine from L-glutamate: step 2/4. Its function is as follows. Catalyzes the ATP-dependent phosphorylation of N-acetyl-L-glutamate. In Phocaeicola vulgatus (strain ATCC 8482 / DSM 1447 / JCM 5826 / CCUG 4940 / NBRC 14291 / NCTC 11154) (Bacteroides vulgatus), this protein is Acetylglutamate kinase.